We begin with the raw amino-acid sequence, 187 residues long: Elongation factor P (187 aa).

Belongs to the elongation factor P family.

Its subcellular location is the cytoplasm. It participates in protein biosynthesis; polypeptide chain elongation. Involved in peptide bond synthesis. Stimulates efficient translation and peptide-bond synthesis on native or reconstituted 70S ribosomes in vitro. Probably functions indirectly by altering the affinity of the ribosome for aminoacyl-tRNA, thus increasing their reactivity as acceptors for peptidyl transferase. This is Elongation factor P from Granulibacter bethesdensis (strain ATCC BAA-1260 / CGDNIH1).